Here is a 206-residue protein sequence, read N- to C-terminus: IALAGLSILLFVYMGRNVEDPRAQLIFVATLMVPLVSISSYTGLVSGLTVGFLEMPAGHALAGMGAGPEGGVFTPWGRYLTWAFSTPMILIALGLLAGSNMSKLFTAVVADVGMCITGLAAALTTSSYLLRWVWYGISCAFFVVVLYILLAEWAKDAEVAGTADIFNTLKVLTVVLWLGYPIFWALGAEGLAVLDIAITSWAYSGM.

The helical transmembrane segment at 1 to 15 (IALAGLSILLFVYMG) threads the bilayer. Topologically, residues 16-21 (RNVEDP) are cytoplasmic. The helical transmembrane segment at 22 to 45 (RAQLIFVATLMVPLVSISSYTGLV) threads the bilayer. Topologically, residues 46–75 (SGLTVGFLEMPAGHALAGMGAGPEGGVFTP) are extracellular. Residues 76–97 (WGRYLTWAFSTPMILIALGLLA) form a helical membrane-spanning segment. The Cytoplasmic portion of the chain corresponds to 98 to 100 (GSN). A helical transmembrane segment spans residues 101–124 (MSKLFTAVVADVGMCITGLAAALT). At 125–127 (TSS) the chain is on the extracellular side. A helical transmembrane segment spans residues 128 to 150 (YLLRWVWYGISCAFFVVVLYILL). At 151-162 (AEWAKDAEVAGT) the chain is on the cytoplasmic side. The helical transmembrane segment at 163-186 (ADIFNTLKVLTVVLWLGYPIFWAL) threads the bilayer. Over 187-195 (GAEGLAVLD) the chain is Extracellular. A helical membrane pass occupies residues 196–206 (IAITSWAYSGM).

The protein belongs to the archaeal/bacterial/fungal opsin family.

It is found in the cell membrane. Functionally, light-driven chloride pump. This chain is Halorhodopsin (hop), found in Halobacterium halobium (strain mex).